We begin with the raw amino-acid sequence, 915 residues long: Transferrin-binding protein A (915 aa).

The signal sequence occupies residues 1–24; that stretch reads MQQQHLFRLNILCLSLMTALPAYA. Positions 38–45 match the TonB box motif; the sequence is DTIQVKAK. The TBDR plug domain occupies 51–176; the sequence is RDNEVTGLGK…LAGSVAFQTK (126 aa). In terms of domain architecture, TBDR beta-barrel spans 187–915; sequence QWGIQSKTAY…NYTFSLEMKF (729 aa). A compositionally biased stretch (polar residues) spans 526-540; sequence LKTPPQNNGKKTSPN. The segment at 526-545 is disordered; the sequence is LKTPPQNNGKKTSPNGREKN. Positions 898-915 match the TonB C-terminal box motif; that stretch reads NRYAAPGRNYTFSLEMKF.

The protein belongs to the TonB-dependent receptor family. As to quaternary structure, binds both human apo- and holo-transferrin (TF), via the TF C-terminus. Forms a large complex with TF and TbpB.

It localises to the cell outer membrane. Neisseria acquires iron by extracting it from serum transferrin (TF) in its human host. Acts as a TF receptor and is required for TF utilization. Binds both apo- and holo-TF, via the TF C-terminus. This chain is Transferrin-binding protein A, found in Neisseria gonorrhoeae.